The primary structure comprises 223 residues: Glutathione-specific gamma-glutamylcyclotransferase 1 (223 aa).

The disordered stretch occupies residues 1-26 (MKQESASQSTPPPSLSPAPSSAQPSW). 36–41 (IFGYGS) is a binding site for substrate. The Proton acceptor role is filled by E116.

The protein belongs to the gamma-glutamylcyclotransferase family. ChaC subfamily. As to quaternary structure, interacts with NOTCH1 (via extracellular region). In terms of tissue distribution, widely expressed, with high expression in forebrain and anterior spinal cord. Expressed at intermediate level in the dorsal aorta and heart. Present throughout adult brain (at protein level).

The protein localises to the cytoplasm. It localises to the cytosol. The protein resides in the golgi apparatus. It is found in the trans-Golgi network. It catalyses the reaction glutathione = L-cysteinylglycine + 5-oxo-L-proline. Functionally, catalyzes the cleavage of glutathione into 5-oxo-L-proline and a Cys-Gly dipeptide. Acts specifically on glutathione, but not on other gamma-glutamyl peptides. Glutathione depletion is an important factor for apoptosis initiation and execution. Acts as a pro-apoptotic component of the unfolded protein response pathway by mediating the pro-apoptotic effects of the ATF4-ATF3-DDIT3/CHOP cascade. Negative regulator of Notch signaling pathway involved in embryonic neurogenesis: acts by inhibiting Notch cleavage by furin, maintaining Notch in an immature inactive form, thereby promoting neurogenesis in embryos. This is Glutathione-specific gamma-glutamylcyclotransferase 1 from Mus musculus (Mouse).